We begin with the raw amino-acid sequence, 159 residues long: Ribosomal RNA large subunit methyltransferase H (159 aa).

S-adenosyl-L-methionine-binding positions include leucine 76, glycine 108, and 127–132 (FSRMTF).

Belongs to the RNA methyltransferase RlmH family. Homodimer.

The protein localises to the cytoplasm. It carries out the reaction pseudouridine(1915) in 23S rRNA + S-adenosyl-L-methionine = N(3)-methylpseudouridine(1915) in 23S rRNA + S-adenosyl-L-homocysteine + H(+). Its function is as follows. Specifically methylates the pseudouridine at position 1915 (m3Psi1915) in 23S rRNA. The protein is Ribosomal RNA large subunit methyltransferase H of Bacillus licheniformis (strain ATCC 14580 / DSM 13 / JCM 2505 / CCUG 7422 / NBRC 12200 / NCIMB 9375 / NCTC 10341 / NRRL NRS-1264 / Gibson 46).